Reading from the N-terminus, the 376-residue chain is N-acetyldiaminopimelate deacetylase (376 aa).

Residue Asp-70 is part of the active site. Catalysis depends on Glu-129, which acts as the Proton acceptor.

It belongs to the peptidase M20A family. N-acetyldiaminopimelate deacetylase subfamily.

It carries out the reaction N-acetyl-(2S,6S)-2,6-diaminopimelate + H2O = (2S,6S)-2,6-diaminopimelate + acetate. It participates in amino-acid biosynthesis; L-lysine biosynthesis via DAP pathway; LL-2,6-diaminopimelate from (S)-tetrahydrodipicolinate (acetylase route): step 3/3. In terms of biological role, catalyzes the conversion of N-acetyl-diaminopimelate to diaminopimelate and acetate. This is N-acetyldiaminopimelate deacetylase from Geobacillus sp. (strain WCH70).